A 247-amino-acid chain; its full sequence is tRNA (guanine-N(1)-)-methyltransferase (247 aa).

Residues Gly115 and 134-139 (IGDFVL) each bind S-adenosyl-L-methionine.

It belongs to the RNA methyltransferase TrmD family. As to quaternary structure, homodimer.

Its subcellular location is the cytoplasm. It carries out the reaction guanosine(37) in tRNA + S-adenosyl-L-methionine = N(1)-methylguanosine(37) in tRNA + S-adenosyl-L-homocysteine + H(+). In terms of biological role, specifically methylates guanosine-37 in various tRNAs. The protein is tRNA (guanine-N(1)-)-methyltransferase of Anaeromyxobacter dehalogenans (strain 2CP-C).